We begin with the raw amino-acid sequence, 485 residues long: Glycogen synthase (485 aa).

Lys15 provides a ligand contact to ADP-alpha-D-glucose.

It belongs to the glycosyltransferase 1 family. Bacterial/plant glycogen synthase subfamily.

It carries out the reaction [(1-&gt;4)-alpha-D-glucosyl](n) + ADP-alpha-D-glucose = [(1-&gt;4)-alpha-D-glucosyl](n+1) + ADP + H(+). The protein operates within glycan biosynthesis; glycogen biosynthesis. In terms of biological role, synthesizes alpha-1,4-glucan chains using ADP-glucose. This chain is Glycogen synthase, found in Rhodospirillum rubrum (strain ATCC 11170 / ATH 1.1.1 / DSM 467 / LMG 4362 / NCIMB 8255 / S1).